We begin with the raw amino-acid sequence, 150 residues long: SsrA-binding protein (150 aa).

It belongs to the SmpB family.

The protein resides in the cytoplasm. Functionally, required for rescue of stalled ribosomes mediated by trans-translation. Binds to transfer-messenger RNA (tmRNA), required for stable association of tmRNA with ribosomes. tmRNA and SmpB together mimic tRNA shape, replacing the anticodon stem-loop with SmpB. tmRNA is encoded by the ssrA gene; the 2 termini fold to resemble tRNA(Ala) and it encodes a 'tag peptide', a short internal open reading frame. During trans-translation Ala-aminoacylated tmRNA acts like a tRNA, entering the A-site of stalled ribosomes, displacing the stalled mRNA. The ribosome then switches to translate the ORF on the tmRNA; the nascent peptide is terminated with the 'tag peptide' encoded by the tmRNA and targeted for degradation. The ribosome is freed to recommence translation, which seems to be the essential function of trans-translation. This chain is SsrA-binding protein, found in Borrelia garinii subsp. bavariensis (strain ATCC BAA-2496 / DSM 23469 / PBi) (Borreliella bavariensis).